Here is a 204-residue protein sequence, read N- to C-terminus: Casparian strip membrane protein 2 (204 aa).

The Cytoplasmic segment spans residues 1 to 41 (MKNESTFIDVPADSSSAMKGKAPLIGVAKDHTASGSGGYNR). The chain crosses the membrane as a helical span at residues 42 to 62 (GLSIFDFLLRLAAIVAASVAA). Residues 63–92 (GTMFTSDETLPFFTQFLQFEAGYDDLPTFQ) lie on the Extracellular side of the membrane. Residues 93-113 (FFVIAMSLVSGYIVLSLPISV) form a helical membrane-spanning segment. Topologically, residues 114–125 (VTIVRPLAAAPR) are cytoplasmic. The helical transmembrane segment at 126-146 (LLLLVLDTAVMGLTMAAASSA) threads the bilayer. Residues 147–178 (AAISYVAHNGNQNTNWLPICQQFFDFCQKTSG) are Extracellular-facing. The helical transmembrane segment at 179–199 (AVVSSFVAVVFFMILVVLSGV) threads the bilayer. At 200–204 (ALERH) the chain is on the cytoplasmic side.

It belongs to the Casparian strip membrane proteins (CASP) family. Homodimer and heterodimers.

It localises to the cell membrane. Regulates membrane-cell wall junctions and localized cell wall deposition. Required for establishment of the Casparian strip membrane domain (CSD) and the subsequent formation of Casparian strips, a cell wall modification of the root endodermis that determines an apoplastic barrier between the intraorganismal apoplasm and the extraorganismal apoplasm and prevents lateral diffusion. In Raphanus sativus (Radish), this protein is Casparian strip membrane protein 2.